A 497-amino-acid chain; its full sequence is 4,4'-diaponeurosporene oxygenase (497 aa).

Residue 7–19 (VIGGGLGGISAAI) coordinates FAD.

The protein belongs to the carotenoid/retinoid oxidoreductase family. CrtP subfamily. FAD serves as cofactor.

The enzyme catalyses all-trans-4,4'-diaponeurosporene + 2 AH2 + 2 O2 = 4,4'-diaponeurosporenal + 2 A + 3 H2O. Its pathway is carotenoid biosynthesis; staphyloxanthin biosynthesis; staphyloxanthin from farnesyl diphosphate: step 3/5. Its function is as follows. Involved in the biosynthesis of the yellow-orange carotenoid staphyloxanthin, which plays a role in the virulence via its protective function against oxidative stress. Catalyzes the oxidation of the terminal methyl side group of 4,4'-diaponeurosporene to form 4,4'-diaponeurosporen-4-al. The chain is 4,4'-diaponeurosporene oxygenase from Staphylococcus aureus (strain bovine RF122 / ET3-1).